A 133-amino-acid polypeptide reads, in one-letter code: Small ribosomal subunit protein uS8 (133 aa).

The protein belongs to the universal ribosomal protein uS8 family. As to quaternary structure, part of the 30S ribosomal subunit. Contacts proteins S5 and S12.

One of the primary rRNA binding proteins, it binds directly to 16S rRNA central domain where it helps coordinate assembly of the platform of the 30S subunit. This is Small ribosomal subunit protein uS8 from Anaplasma phagocytophilum (strain HZ).